We begin with the raw amino-acid sequence, 421 residues long: Inhibitor of growth protein 3 (421 aa).

A disordered region spans residues 129-163; sequence PSQPVNNHHAHSHTPVEKRKYNPTSHHAAADHIPE. Residues Lys148, Lys165, and Lys167 each participate in a glycyl lysine isopeptide (Lys-Gly) (interchain with G-Cter in SUMO2) cross-link. The residue at position 181 (Lys181) is an N6-acetyllysine. A Glycyl lysine isopeptide (Lys-Gly) (interchain with G-Cter in SUMO2) cross-link involves residue Lys256. Lys264 is modified (N6-acetyllysine). The segment covering 286–296 has biased composition (polar residues); it reads TQNASSSATDS. Residues 286 to 323 form a disordered region; sequence TQNASSSATDSRSGRKSKNNTKSSSQQSSSSSSSSSSS. The span at 308–323 shows a compositional bias: low complexity; sequence SSSQQSSSSSSSSSSS. The segment at 363–412 adopts a PHD-type zinc-finger fold; sequence PRYCICNQVSYGEMVGCDNQDCPIEWFHYGCVGLTEAPKGKWFCPQCTAA. 8 residues coordinate Zn(2+): Cys366, Cys368, Cys379, Cys384, His390, Cys393, Cys406, and Cys409.

This sequence belongs to the ING family. In terms of assembly, interacts with H3K4me3 and to a lesser extent with H3K4me2. Component of the NuA4 histone acetyltransferase complex which contains the catalytic subunit KAT5/TIP60 and the subunits EP400, TRRAP/PAF400, BRD8/SMAP, EPC1, DMAP1/DNMAP1, RUVBL1/TIP49, RUVBL2, ING3, actin, ACTL6A/BAF53A, MORF4L1/MRG15, MORF4L2/MRGX, MRGBP, YEATS4/GAS41, VPS72/YL1 and MEAF6. The NuA4 complex interacts with MYC. HTATTIP/TIP60, EPC1, and ING3 together constitute a minimal HAT complex termed Piccolo NuA4. Component of a SWR1-like complex.

Its subcellular location is the nucleus. Component of the NuA4 histone acetyltransferase (HAT) complex which is involved in transcriptional activation of select genes principally by acetylation of nucleosomal histones H4 and H2A. This modification may both alter nucleosome - DNA interactions and promote interaction of the modified histones with other proteins which positively regulate transcription. This complex may be required for the activation of transcriptional programs associated with oncogene and proto-oncogene mediated growth induction, tumor suppressor mediated growth arrest and replicative senescence, apoptosis, and DNA repair. NuA4 may also play a direct role in DNA repair when directly recruited to sites of DNA damage. Component of a SWR1-like complex that specifically mediates the removal of histone H2A.Z/H2AZ1 from the nucleosome. The chain is Inhibitor of growth protein 3 (Ing3) from Mus musculus (Mouse).